The primary structure comprises 279 residues: Shikimate dehydrogenase (NADP(+)) (279 aa).

Residues 20-22 (SRS) and threonine 67 each bind shikimate. Residue lysine 71 is the Proton acceptor of the active site. Aspartate 83 is a binding site for NADP(+). Residues asparagine 92 and aspartate 108 each coordinate shikimate. NADP(+)-binding positions include 134 to 138 (GAGGA) and leucine 223. Position 225 (tyrosine 225) interacts with shikimate. Residue glycine 246 participates in NADP(+) binding.

The protein belongs to the shikimate dehydrogenase family. As to quaternary structure, homodimer.

The enzyme catalyses shikimate + NADP(+) = 3-dehydroshikimate + NADPH + H(+). Its pathway is metabolic intermediate biosynthesis; chorismate biosynthesis; chorismate from D-erythrose 4-phosphate and phosphoenolpyruvate: step 4/7. Its function is as follows. Involved in the biosynthesis of the chorismate, which leads to the biosynthesis of aromatic amino acids. Catalyzes the reversible NADPH linked reduction of 3-dehydroshikimate (DHSA) to yield shikimate (SA). This Cereibacter sphaeroides (strain KD131 / KCTC 12085) (Rhodobacter sphaeroides) protein is Shikimate dehydrogenase (NADP(+)).